The chain runs to 251 residues: Geranylgeranylglyceryl phosphate synthase (251 aa).

Residues aspartate 25 and serine 54 each coordinate Mg(2+). Sn-glycerol 1-phosphate contacts are provided by residues tyrosine 173–glycine 179, glycine 204–glycine 205, and glycine 226–threonine 227.

This sequence belongs to the GGGP/HepGP synthase family. Group II subfamily. The cofactor is Mg(2+).

Its subcellular location is the cytoplasm. It carries out the reaction sn-glycerol 1-phosphate + (2E,6E,10E)-geranylgeranyl diphosphate = sn-3-O-(geranylgeranyl)glycerol 1-phosphate + diphosphate. It participates in membrane lipid metabolism; glycerophospholipid metabolism. Functionally, prenyltransferase that catalyzes the transfer of the geranylgeranyl moiety of geranylgeranyl diphosphate (GGPP) to the C3 hydroxyl of sn-glycerol-1-phosphate (G1P). This reaction is the first ether-bond-formation step in the biosynthesis of archaeal membrane lipids. This Pyrococcus furiosus (strain ATCC 43587 / DSM 3638 / JCM 8422 / Vc1) protein is Geranylgeranylglyceryl phosphate synthase.